The sequence spans 468 residues: 6-phospho-beta-galactosidase (468 aa).

D-galactose 6-phosphate is bound by residues Gln-19, His-116, Asn-159, Glu-160, and Asn-297. Catalysis depends on Glu-160, which acts as the Proton donor. Catalysis depends on Glu-375, which acts as the Nucleophile. D-galactose 6-phosphate-binding residues include Ser-428, Trp-429, Lys-435, and Tyr-437.

It belongs to the glycosyl hydrolase 1 family.

The catalysed reaction is a 6-phospho-beta-D-galactoside + H2O = D-galactose 6-phosphate + an alcohol. It functions in the pathway carbohydrate metabolism; lactose degradation; D-galactose 6-phosphate and beta-D-glucose from lactose 6-phosphate: step 1/1. This is 6-phospho-beta-galactosidase from Streptococcus pyogenes serotype M12 (strain MGAS2096).